A 438-amino-acid polypeptide reads, in one-letter code: UPF0229 protein R01398 (438 aa).

The disordered stretch occupies residues 55–107 (PARGVNEPAFQPDSNSGERRHVLPGNREFAAGDRIPKRGSGGGAGNAGAGTGQ). Positions 93–105 (GSGGGAGNAGAGT) are enriched in gly residues.

The protein belongs to the UPF0229 family.

The chain is UPF0229 protein R01398 from Rhizobium meliloti (strain 1021) (Ensifer meliloti).